The sequence spans 301 residues: UPF0282 protein Pcal_1546 (301 aa).

Belongs to the UPF0282 family.

The sequence is that of UPF0282 protein Pcal_1546 from Pyrobaculum calidifontis (strain DSM 21063 / JCM 11548 / VA1).